The primary structure comprises 72 residues: Translation initiation factor IF-1 (72 aa).

Positions Met1–Lys72 constitute an S1-like domain.

The protein belongs to the IF-1 family. As to quaternary structure, component of the 30S ribosomal translation pre-initiation complex which assembles on the 30S ribosome in the order IF-2 and IF-3, IF-1 and N-formylmethionyl-tRNA(fMet); mRNA recruitment can occur at any time during PIC assembly.

The protein resides in the cytoplasm. In terms of biological role, one of the essential components for the initiation of protein synthesis. Stabilizes the binding of IF-2 and IF-3 on the 30S subunit to which N-formylmethionyl-tRNA(fMet) subsequently binds. Helps modulate mRNA selection, yielding the 30S pre-initiation complex (PIC). Upon addition of the 50S ribosomal subunit IF-1, IF-2 and IF-3 are released leaving the mature 70S translation initiation complex. The polypeptide is Translation initiation factor IF-1 (Maricaulis maris (strain MCS10) (Caulobacter maris)).